Reading from the N-terminus, the 124-residue chain is Ribonuclease pancreatic (124 aa).

The span at 1 to 13 (KESAAAKFERQHM) shows a compositional bias: basic and acidic residues. Residues 1 to 25 (KESAAAKFERQHMDPSPSSASSSNY) are disordered. Residues K7 and R10 each coordinate substrate. The active-site Proton acceptor is the H12. Cystine bridges form between C26/C84, C40/C95, C58/C110, and C65/C72. An N-linked (GlcNAc...) asparagine; partial glycan is attached at N34. Substrate contacts are provided by residues 41 to 45 (KPVNT), K66, and R85. H119 (proton donor) is an active-site residue.

It belongs to the pancreatic ribonuclease family. As to quaternary structure, monomer. Interacts with and forms tight 1:1 complexes with RNH1. Dimerization of two such complexes may occur. Interaction with RNH1 inhibits this protein. Pancreas.

It localises to the secreted. It catalyses the reaction an [RNA] containing cytidine + H2O = an [RNA]-3'-cytidine-3'-phosphate + a 5'-hydroxy-ribonucleotide-3'-[RNA].. The catalysed reaction is an [RNA] containing uridine + H2O = an [RNA]-3'-uridine-3'-phosphate + a 5'-hydroxy-ribonucleotide-3'-[RNA].. In terms of biological role, endonuclease that catalyzes the cleavage of RNA on the 3' side of pyrimidine nucleotides. Acts on single-stranded and double-stranded RNA. This is Ribonuclease pancreatic (RNASE1) from Capreolus capreolus (European roe deer).